The primary structure comprises 1106 residues: MNISANCLFSGSSLASEVHAAAVNGDKSTLLKLIAGNSELKDKEDQFGRTPLMYCVLADRVDCAEALLKAGADVNRADRSRRTALHLAAQKGNYRFMKLLLARRGNWMQKDLEGMTPLHLTTRHKSPKCLALLLKHMAPGEVDTQDRNKQTALHWSAYYNNPEHVKLLIKHDSNIGIPDIEGKIPLHWAANNKDPSAIHTVKCILEAAPTESLLNWQDYEGRTPLHFAVADGNVAVVDVLTSYEGCNVTSYDNLFRTPLHWAALLGHAQIVHLLLERNKFGTIPSDSQGATPLHYAAQSNFAETVEVFLKHPSVKDDSDLEGRTSFMWAAGKGSDNVIRTMLDLKLDIDINMTDKYAGTALHAAALSGHVSTVKLLLERNAQVDALDVMKHTPLFRACEMGHKEVIQTLIKGGARVDLVDQDGHSPLHWAALGGNADVCQILIENKINPNVQDYAGRTPLQCAAYGGYINCMVVLLENNADPNIQDKEGRTALHWLCNNGYLDAIKLLLGFDAFPNHMENSEERYTPLDYALLGEHHEVIQFMLEHGALSIAAIQDIAAFKIQAVYKGYKVRKAFQERKNLLMKHEQLRKDAAAKKREEESKRKEASLQKGMQNMEQNKFQVQLSTAVREKTASTLQLSNKQTDLQNKRPLSVSASQIQLGRNSRGSPKACRSKGSPKESCLSSELQSEGHNIRQELLRKHIKSKPSCVHFHCGKVKEVTKVEAKHQVAAATELNGEKHKEHAVEANGTSAHGNRRHASACGTAGAGEKTRDQSLSSSGNRGHCEGTSVVVCNVSCAGGIARNSKRCEAVPKSKRHQQKSRHKEVNYERCSPAGSSRPGSAKVVFVNTRNATVCAIEHANNVGNHELAKKTSPLLSTETESTGTGPRNPAACSALDDSLNLEKTGEVGSRSAGDQLCSVAWQSTNIELIPLEIRMQIIEKERTRKELFRKKNYAATVIQRTWRSYRLRQELSQLLSAKRQRKEDEDKWRQETAAFLIQVAWKKQLNHSPQKSVPSCKSLKSVNKTSSAIKTSKQSILKQIYGRSQEGRVYQPARPPSKLKLSDVQLVSANNLQYVNLLENVGKSKQFSYNMRPSTAAKSKSTRLEH.

ANK repeat units lie at residues 13 to 42 (SLAS…ELKD), 47 to 76 (FGRT…DVNR), 80 to 110 (SRRT…WMQK), 113 to 144 (EGMT…EVDT), 148 to 177 (NKQT…NIGI), 181 to 213 (EGKI…TESL), 220 to 250 (EGRT…NVTS), 254 to 285 (LFRT…TIPS), 288 to 317 (QGAT…VKDD), 321 to 350 (EGRT…DIDI), 356 to 385 (YAGT…QVDA), 389 to 418 (MKHT…RVDL), 422 to 451 (DGHS…NPNV), 455 to 484 (AGRT…DPNI), 488 to 517 (EGRT…FPNH), and 523 to 553 (ERYT…SIAA). A D-box 1 motif is present at residues 490-498 (RTALHWLCN). In terms of domain architecture, IQ 1 spans 555-584 (QDIAAFKIQAVYKGYKVRKAFQERKNLLMK). The segment covering 589-607 (RKDAAAKKREEESKRKEAS) has biased composition (basic and acidic residues). Disordered stretches follow at residues 589–615 (RKDA…MQNM), 636–688 (LQLS…ELQS), 746–782 (ANGT…GNRG), and 809–833 (AVPK…CSPA). Polar residues-rich tracts occupy residues 636–645 (LQLSNKQTDL) and 653–666 (VSAS…NSRG). A compositionally biased stretch (basic residues) spans 812–822 (KSKRHQQKSRH). A D-box 2 motif is present at residues 944–952 (RKELFRKKN). One can recognise an IQ 2 domain in the interval 951-980 (KNYAATVIQRTWRSYRLRQELSQLLSAKRQ).

Binds calmodulin via its IQ domains. Interacts with APC2.

It localises to the cytoplasm. The protein localises to the cytoskeleton. In terms of biological role, required for normal renal development and establishment of left-right axis. Probably acts as a molecular switch between different Wnt signaling pathways. Inhibits the canonical Wnt pathway by targeting cytoplasmic disheveled for degradation by the ubiquitin-proteasome. This suggests that it is required in renal development to oppose the repression of terminal differentiation of tubular epithelial cells by Wnt signaling. The chain is Inversin (INVS) from Gallus gallus (Chicken).